A 347-amino-acid chain; its full sequence is 5-formaminoimidazole-4-carboxamide-1-(beta)-D-ribofuranosyl 5'-monophosphate synthetase (347 aa).

Residues His-23 and Ser-91 each coordinate 5-amino-1-(5-phospho-beta-D-ribosyl)imidazole-4-carboxamide. Residues 112–323 (RKILLWESDQ…YSYLYWDEPM (212 aa)) enclose the ATP-grasp domain. ATP-binding positions include 142–196 (PDEV…VPAY) and Glu-218. Residue Asn-244 participates in 5-amino-1-(5-phospho-beta-D-ribosyl)imidazole-4-carboxamide binding. Glu-283 and Glu-296 together coordinate Mg(2+).

This sequence belongs to the phosphohexose mutase family. It depends on Mg(2+) as a cofactor. Mn(2+) is required as a cofactor.

The enzyme catalyses 5-amino-1-(5-phospho-beta-D-ribosyl)imidazole-4-carboxamide + formate + ATP = 5-formamido-1-(5-phospho-D-ribosyl)imidazole-4-carboxamide + ADP + phosphate. The protein operates within purine metabolism; IMP biosynthesis via de novo pathway; 5-formamido-1-(5-phospho-D-ribosyl)imidazole-4-carboxamide from 5-amino-1-(5-phospho-D-ribosyl)imidazole-4-carboxamide (formate route): step 1/1. Functionally, catalyzes the ATP- and formate-dependent formylation of 5-aminoimidazole-4-carboxamide-1-beta-d-ribofuranosyl 5'-monophosphate (AICAR) to 5-formaminoimidazole-4-carboxamide-1-beta-d-ribofuranosyl 5'-monophosphate (FAICAR) in the absence of folates. The sequence is that of 5-formaminoimidazole-4-carboxamide-1-(beta)-D-ribofuranosyl 5'-monophosphate synthetase from Ignicoccus hospitalis (strain KIN4/I / DSM 18386 / JCM 14125).